The following is a 144-amino-acid chain: Single-stranded DNA-binding protein 3 (144 aa).

Residues 1–103 form the SSB domain; that stretch reads MNKVVLIGRL…IVAEEVQFLE (103 aa). The segment covering 112–134 has biased composition (polar residues); that stretch reads MANDQFNNGNENGSMQLPDNNDI. The interval 112–144 is disordered; it reads MANDQFNNGNENGSMQLPDNNDITPIDDGDIPF.

As to quaternary structure, homotetramer.

In Clostridium acetobutylicum (strain ATCC 824 / DSM 792 / JCM 1419 / IAM 19013 / LMG 5710 / NBRC 13948 / NRRL B-527 / VKM B-1787 / 2291 / W), this protein is Single-stranded DNA-binding protein 3 (ssb3).